Reading from the N-terminus, the 1879-residue chain is Protein TIC 214 (1879 aa).

The next 6 helical transmembrane spans lie at 18–38, 67–87, 90–110, 127–147, 175–195, and 218–238; these read IINS…FSIG, FITG…HLAL, PHTI…WNNH, LSIQ…HFIL, VGWL…LVWI, and IFSI…PSPI. Positions 243–291 are disordered; that stretch reads LKETEERGESEEERDVEKTSETKGTKQEQEGSTEEDPSPSLFSEEKEDP. Positions 257 to 271 are enriched in basic and acidic residues; it reads DVEKTSETKGTKQEQ.

The protein belongs to the TIC214 family. In terms of assembly, part of the Tic complex.

It is found in the plastid. It localises to the chloroplast inner membrane. Functionally, involved in protein precursor import into chloroplasts. May be part of an intermediate translocation complex acting as a protein-conducting channel at the inner envelope. The polypeptide is Protein TIC 214 (Morus indica (Mulberry)).